The following is a 1434-amino-acid chain: DNA-directed RNA polymerase subunit beta' (1434 aa).

Zn(2+)-binding residues include Cys70, Cys72, Cys85, and Cys88. Mg(2+) is bound by residues Asp460, Asp462, and Asp464. Zn(2+) is bound by residues Cys840, Cys915, Cys922, and Cys925.

It belongs to the RNA polymerase beta' chain family. The RNAP catalytic core consists of 2 alpha, 1 beta, 1 beta' and 1 omega subunit. When a sigma factor is associated with the core the holoenzyme is formed, which can initiate transcription. Requires Mg(2+) as cofactor. The cofactor is Zn(2+).

The catalysed reaction is RNA(n) + a ribonucleoside 5'-triphosphate = RNA(n+1) + diphosphate. Functionally, DNA-dependent RNA polymerase catalyzes the transcription of DNA into RNA using the four ribonucleoside triphosphates as substrates. This is DNA-directed RNA polymerase subunit beta' from Aeromonas hydrophila subsp. hydrophila (strain ATCC 7966 / DSM 30187 / BCRC 13018 / CCUG 14551 / JCM 1027 / KCTC 2358 / NCIMB 9240 / NCTC 8049).